The chain runs to 146 residues: MYACSKFVSTRSLIRSTSLRSTSQLLSRPLSAVELKRPQMPTDESLSSLAVRRPLTSLIPSRSFQTSAISRDIDTAAKFIGAGAATVGVAGSGAGIGTVFGSLIIGYARNPSLKQQLFSYAILGFALSEAMGLFCLMVAFLILFAM.

A mitochondrion-targeting transit peptide spans 1-71 (MYACSKFVST…RSFQTSAISR (71 aa)). A helical transmembrane segment spans residues 87–107 (VGVAGSGAGIGTVFGSLIIGY). Lys114 is subject to N6,N6,N6-trimethyllysine. A helical membrane pass occupies residues 122–142 (ILGFALSEAMGLFCLMVAFLI).

Belongs to the ATPase C chain family. F-type ATPases have 2 components, CF(1) - the catalytic core - and CF(0) - the membrane proton channel. CF(1) has five subunits: alpha(3), beta(3), gamma(1), delta(1), epsilon(1). CF(0) has three main subunits: a, b and c. Interacts with DNAJC30; interaction is direct. In terms of processing, trimethylated by ATPSCKMT at Lys-114. Methylation is required for proper incorporation of the C subunit into the ATP synthase complex and mitochondrial respiration.

It localises to the mitochondrion membrane. In terms of biological role, mitochondrial membrane ATP synthase (F(1)F(0) ATP synthase or Complex V) produces ATP from ADP in the presence of a proton gradient across the membrane which is generated by electron transport complexes of the respiratory chain. F-type ATPases consist of two structural domains, F(1) - containing the extramembraneous catalytic core and F(0) - containing the membrane proton channel, linked together by a central stalk and a peripheral stalk. During catalysis, ATP synthesis in the catalytic domain of F(1) is coupled via a rotary mechanism of the central stalk subunits to proton translocation. Part of the complex F(0) domain. A homomeric c-ring of probably 10 subunits is part of the complex rotary element. This Mus musculus (Mouse) protein is ATP synthase F(0) complex subunit C2, mitochondrial.